The sequence spans 246 residues: Protein phosphatase PhpP (246 aa).

Residues 2 to 240 (EISLLTDVGQ…DNITVALVSM (239 aa)) form the PPM-type phosphatase domain. Mn(2+) contacts are provided by aspartate 36, glycine 37, aspartate 192, and aspartate 231.

It belongs to the PP2C family. The cofactor is Mn(2+).

It localises to the cytoplasm. The enzyme catalyses O-phospho-L-seryl-[protein] + H2O = L-seryl-[protein] + phosphate. The catalysed reaction is O-phospho-L-threonyl-[protein] + H2O = L-threonyl-[protein] + phosphate. Functionally, protein phosphatase able to dephosphorylate StkP-P and other phosphorylated protein substrates. PhpP and its cognate protein kinase StkP appear to constitute a functional signaling couple in vivo, PhpP's primary role being probably to control phosphorylation levels of StkP and of its targets. PhpP thus performs an essential control of StkP activity. Also dephosphorylates DivIVA in vivo. This chain is Protein phosphatase PhpP (phpP), found in Streptococcus pneumoniae serotype 2 (strain D39 / NCTC 7466).